The sequence spans 513 residues: Glycogen synthase (513 aa).

Residue lysine 47 coordinates ADP-alpha-D-glucose.

It belongs to the glycosyltransferase 1 family. Bacterial/plant glycogen synthase subfamily.

It catalyses the reaction [(1-&gt;4)-alpha-D-glucosyl](n) + ADP-alpha-D-glucose = [(1-&gt;4)-alpha-D-glucosyl](n+1) + ADP + H(+). Its pathway is glycan biosynthesis; glycogen biosynthesis. In terms of biological role, synthesizes alpha-1,4-glucan chains using ADP-glucose. This is Glycogen synthase from Pseudomonas paraeruginosa (strain DSM 24068 / PA7) (Pseudomonas aeruginosa (strain PA7)).